Here is a 469-residue protein sequence, read N- to C-terminus: Citrate synthase, mitochondrial (469 aa).

The N-terminal 30 residues, 1–30 (MSFLTVSRLAPKLLNSKNATYFLVAARNAS), are a transit peptide targeting the mitochondrion. Catalysis depends on residues H304 and H350. R359 is a binding site for oxaloacetate. D405 is an active-site residue. Oxaloacetate contacts are provided by R431 and R451.

Belongs to the citrate synthase family. As to quaternary structure, homodimer.

It is found in the mitochondrion matrix. The catalysed reaction is oxaloacetate + acetyl-CoA + H2O = citrate + CoA + H(+). It participates in carbohydrate metabolism; tricarboxylic acid cycle; isocitrate from oxaloacetate: step 1/2. Key enzyme of the Krebs tricarboxylic acid cycle which catalyzes the synthesis of citrate from acetyl coenzyme A and oxaloacetate. The sequence is that of Citrate synthase, mitochondrial (cs) from Xiphias gladius (Swordfish).